The primary structure comprises 542 residues: Chaperonin GroEL (542 aa).

ATP is bound by residues 29–32, 86–90, G413, 476–478, and D492; these read TLGP, DGTTT, and NAA. Positions 522-542 are disordered; that stretch reads PDENGPAAVPDMGMGGMGGMM.

Belongs to the chaperonin (HSP60) family. As to quaternary structure, forms a cylinder of 14 subunits composed of two heptameric rings stacked back-to-back. Interacts with the co-chaperonin GroES.

The protein resides in the cytoplasm. The catalysed reaction is ATP + H2O + a folded polypeptide = ADP + phosphate + an unfolded polypeptide.. Together with its co-chaperonin GroES, plays an essential role in assisting protein folding. The GroEL-GroES system forms a nano-cage that allows encapsulation of the non-native substrate proteins and provides a physical environment optimized to promote and accelerate protein folding. The chain is Chaperonin GroEL from Listeria monocytogenes serotype 4a (strain HCC23).